Here is a 161-residue protein sequence, read N- to C-terminus: uncharacterized protein (161 aa).

A signal peptide spans 1 to 35; that stretch reads MVMAMGFDTVVAAIMATAIIVAVAYTFLAGSTSIA.

This is an uncharacterized protein from Archaeoglobus fulgidus (strain ATCC 49558 / DSM 4304 / JCM 9628 / NBRC 100126 / VC-16).